Consider the following 274-residue polypeptide: MSGTKIHPTALVEKGAQLGENVFIGPFCHIGPEAVIDDGCSLMNHVVIMGKTTLGAKSKVFSHAVLGTDPQNNKHKGGYTTLSIGKNCTIREGVTMHRGSDSSVGMTIVGDDCQFFCYAHVAHDCRVGSHVTFANNAMIAGHVTVGDYVIIGGGSAVHQFVRIGHHAFIGGVSALVGDLIPYGTAVGVQAKLAGLNIIGMKRAGLERKDIHALRHAVAMLFDHSKPFKERVNDVSSFYSTSQSVLDVVNFIKEEGKRFYCTPKFEDDRIKVNKD.

The protein belongs to the transferase hexapeptide repeat family. LpxA subfamily. Homotrimer.

It localises to the cytoplasm. The catalysed reaction is a (3R)-hydroxyacyl-[ACP] + UDP-N-acetyl-alpha-D-glucosamine = a UDP-3-O-[(3R)-3-hydroxyacyl]-N-acetyl-alpha-D-glucosamine + holo-[ACP]. The protein operates within glycolipid biosynthesis; lipid IV(A) biosynthesis; lipid IV(A) from (3R)-3-hydroxytetradecanoyl-[acyl-carrier-protein] and UDP-N-acetyl-alpha-D-glucosamine: step 1/6. Functionally, involved in the biosynthesis of lipid A, a phosphorylated glycolipid that anchors the lipopolysaccharide to the outer membrane of the cell. This is Acyl-[acyl-carrier-protein]--UDP-N-acetylglucosamine O-acyltransferase from Bartonella quintana (strain Toulouse) (Rochalimaea quintana).